The sequence spans 240 residues: UDP-2,3-diacylglucosamine hydrolase (240 aa).

Positions 8, 10, 41, 79, and 114 each coordinate Mn(2+). Residue 79–80 (NR) participates in substrate binding. Residues D122, S160, N164, K167, and H195 each coordinate substrate. H195 and H197 together coordinate Mn(2+).

Belongs to the LpxH family. Mn(2+) serves as cofactor.

Its subcellular location is the cell inner membrane. It carries out the reaction UDP-2-N,3-O-bis[(3R)-3-hydroxytetradecanoyl]-alpha-D-glucosamine + H2O = 2-N,3-O-bis[(3R)-3-hydroxytetradecanoyl]-alpha-D-glucosaminyl 1-phosphate + UMP + 2 H(+). Its pathway is glycolipid biosynthesis; lipid IV(A) biosynthesis; lipid IV(A) from (3R)-3-hydroxytetradecanoyl-[acyl-carrier-protein] and UDP-N-acetyl-alpha-D-glucosamine: step 4/6. In terms of biological role, hydrolyzes the pyrophosphate bond of UDP-2,3-diacylglucosamine to yield 2,3-diacylglucosamine 1-phosphate (lipid X) and UMP by catalyzing the attack of water at the alpha-P atom. Involved in the biosynthesis of lipid A, a phosphorylated glycolipid that anchors the lipopolysaccharide to the outer membrane of the cell. The sequence is that of UDP-2,3-diacylglucosamine hydrolase from Salmonella arizonae (strain ATCC BAA-731 / CDC346-86 / RSK2980).